A 293-amino-acid polypeptide reads, in one-letter code: sn-glycerol-3-phosphate transport system permease protein UgpA (293 aa).

6 consecutive transmembrane segments (helical) span residues 10-30, 72-92, 108-128, 156-176, 204-224, and 261-281; these read ILPY…FFWP, VTVI…LLLA, MMIM…LFMF, MLLV…LFFV, IVFP…TVYA, and LGSS…LTAF. Residues 66-282 enclose the ABC transmembrane type-1 domain; it reads YLNSLKVTVI…VIVIALTAFQ (217 aa).

This sequence belongs to the binding-protein-dependent transport system permease family. As to quaternary structure, the complex is composed of two ATP-binding proteins (UgpC), two transmembrane proteins (UgpA and UgpE) and a solute-binding protein (UgpB).

Its subcellular location is the cell inner membrane. Its function is as follows. Part of the ABC transporter complex UgpBAEC involved in sn-glycerol-3-phosphate (G3P) import. Probably responsible for the translocation of the substrate across the membrane. This chain is sn-glycerol-3-phosphate transport system permease protein UgpA (ugpA), found in Agrobacterium fabrum (strain C58 / ATCC 33970) (Agrobacterium tumefaciens (strain C58)).